The sequence spans 156 residues: Small ribosomal subunit protein uS7 (156 aa).

It belongs to the universal ribosomal protein uS7 family. As to quaternary structure, part of the 30S ribosomal subunit. Contacts proteins S9 and S11.

Its function is as follows. One of the primary rRNA binding proteins, it binds directly to 16S rRNA where it nucleates assembly of the head domain of the 30S subunit. Is located at the subunit interface close to the decoding center, probably blocks exit of the E-site tRNA. The polypeptide is Small ribosomal subunit protein uS7 (Shewanella sp. (strain W3-18-1)).